We begin with the raw amino-acid sequence, 190 residues long: Large ribosomal subunit protein uL22 (190 aa).

The interval Ser-111–Lys-190 is disordered. Positions Ile-125–Ala-147 are enriched in basic and acidic residues. Low complexity predominate over residues Ala-167–Arg-178.

Belongs to the universal ribosomal protein uL22 family. In terms of assembly, part of the 50S ribosomal subunit.

Its function is as follows. This protein binds specifically to 23S rRNA; its binding is stimulated by other ribosomal proteins, e.g. L4, L17, and L20. It is important during the early stages of 50S assembly. It makes multiple contacts with different domains of the 23S rRNA in the assembled 50S subunit and ribosome. In terms of biological role, the globular domain of the protein is located near the polypeptide exit tunnel on the outside of the subunit, while an extended beta-hairpin is found that lines the wall of the exit tunnel in the center of the 70S ribosome. This chain is Large ribosomal subunit protein uL22, found in Helicobacter hepaticus (strain ATCC 51449 / 3B1).